A 414-amino-acid chain; its full sequence is Glucose-1-phosphate adenylyltransferase (414 aa).

Alpha-D-glucose 1-phosphate is bound by residues Y99, G164, 181–182 (EK), and S199.

It belongs to the bacterial/plant glucose-1-phosphate adenylyltransferase family. As to quaternary structure, homotetramer.

The catalysed reaction is alpha-D-glucose 1-phosphate + ATP + H(+) = ADP-alpha-D-glucose + diphosphate. It participates in glycan biosynthesis; glycogen biosynthesis. Its function is as follows. Involved in the biosynthesis of ADP-glucose, a building block required for the elongation reactions to produce glycogen. Catalyzes the reaction between ATP and alpha-D-glucose 1-phosphate (G1P) to produce pyrophosphate and ADP-Glc. This Bifidobacterium adolescentis (strain ATCC 15703 / DSM 20083 / NCTC 11814 / E194a) protein is Glucose-1-phosphate adenylyltransferase.